Here is a 328-residue protein sequence, read N- to C-terminus: Tetraacyldisaccharide 4'-kinase (328 aa).

55-62 (TAGGNGKT) contributes to the ATP binding site.

Belongs to the LpxK family.

The catalysed reaction is a lipid A disaccharide + ATP = a lipid IVA + ADP + H(+). It functions in the pathway glycolipid biosynthesis; lipid IV(A) biosynthesis; lipid IV(A) from (3R)-3-hydroxytetradecanoyl-[acyl-carrier-protein] and UDP-N-acetyl-alpha-D-glucosamine: step 6/6. Its function is as follows. Transfers the gamma-phosphate of ATP to the 4'-position of a tetraacyldisaccharide 1-phosphate intermediate (termed DS-1-P) to form tetraacyldisaccharide 1,4'-bis-phosphate (lipid IVA). The chain is Tetraacyldisaccharide 4'-kinase from Escherichia fergusonii (strain ATCC 35469 / DSM 13698 / CCUG 18766 / IAM 14443 / JCM 21226 / LMG 7866 / NBRC 102419 / NCTC 12128 / CDC 0568-73).